Here is a 630-residue protein sequence, read N- to C-terminus: Putative lipase atg15 (630 aa).

At 1 to 20 the chain is on the cytoplasmic side; the sequence is MKSSQRRIKRHAMRDMSIST. The chain crosses the membrane as a helical; Signal-anchor for type II membrane protein span at residues 21–40; the sequence is LLLSVVLLPSVVSANDHVYF. Residues 41–630 lie on the Lumenal side of the membrane; sequence NPPSPGSPFL…WGSDIEHYEI (590 aa). N-linked (GlcNAc...) asparagine glycosylation is found at asparagine 200, asparagine 222, asparagine 280, and asparagine 304. The active-site Charge relay system is serine 320. N-linked (GlcNAc...) asparagine glycosylation is present at asparagine 466. Positions 577-589 are enriched in polar residues; the sequence is SVTAPPFSTSTSS. The disordered stretch occupies residues 577 to 599; the sequence is SVTAPPFSTSTSSDHVRADHSIG.

The protein belongs to the AB hydrolase superfamily. Lipase family. In terms of assembly, binds to both phosphatidylinositol (PI) and phosphatidylinositol 3,5-bisphosphate (PIP2).

The protein resides in the endosome. It is found in the multivesicular body membrane. Its subcellular location is the prevacuolar compartment membrane. It catalyses the reaction a triacylglycerol + H2O = a diacylglycerol + a fatty acid + H(+). In terms of biological role, lipase which is essential for lysis of subvacuolar cytoplasm to vacuole targeted bodies and intravacuolar autophagic bodies. Involved in the lysis of intravacuolar multivesicular body (MVB) vesicles. The intravacuolar membrane disintegration by atg15 is critical to life span extension. This chain is Putative lipase atg15 (atg15), found in Aspergillus clavatus (strain ATCC 1007 / CBS 513.65 / DSM 816 / NCTC 3887 / NRRL 1 / QM 1276 / 107).